A 299-amino-acid polypeptide reads, in one-letter code: Phosphatidylserine decarboxylase proenzyme (299 aa).

Active-site charge relay system; for autoendoproteolytic cleavage activity residues include Asp115, His171, and Ser258. Ser258 serves as the catalytic Schiff-base intermediate with substrate; via pyruvic acid; for decarboxylase activity. Ser258 is subject to Pyruvic acid (Ser); by autocatalysis.

This sequence belongs to the phosphatidylserine decarboxylase family. PSD-B subfamily. Prokaryotic type II sub-subfamily. As to quaternary structure, heterodimer of a large membrane-associated beta subunit and a small pyruvoyl-containing alpha subunit. It depends on pyruvate as a cofactor. Post-translationally, is synthesized initially as an inactive proenzyme. Formation of the active enzyme involves a self-maturation process in which the active site pyruvoyl group is generated from an internal serine residue via an autocatalytic post-translational modification. Two non-identical subunits are generated from the proenzyme in this reaction, and the pyruvate is formed at the N-terminus of the alpha chain, which is derived from the carboxyl end of the proenzyme. The autoendoproteolytic cleavage occurs by a canonical serine protease mechanism, in which the side chain hydroxyl group of the serine supplies its oxygen atom to form the C-terminus of the beta chain, while the remainder of the serine residue undergoes an oxidative deamination to produce ammonia and the pyruvoyl prosthetic group on the alpha chain. During this reaction, the Ser that is part of the protease active site of the proenzyme becomes the pyruvoyl prosthetic group, which constitutes an essential element of the active site of the mature decarboxylase.

It is found in the cell membrane. The enzyme catalyses a 1,2-diacyl-sn-glycero-3-phospho-L-serine + H(+) = a 1,2-diacyl-sn-glycero-3-phosphoethanolamine + CO2. It participates in phospholipid metabolism; phosphatidylethanolamine biosynthesis; phosphatidylethanolamine from CDP-diacylglycerol: step 2/2. Its function is as follows. Catalyzes the formation of phosphatidylethanolamine (PtdEtn) from phosphatidylserine (PtdSer). In Chlamydia caviae (strain ATCC VR-813 / DSM 19441 / 03DC25 / GPIC) (Chlamydophila caviae), this protein is Phosphatidylserine decarboxylase proenzyme.